The sequence spans 430 residues: Multisubstrate adapter protein soc-1 (430 aa).

The PH domain maps to 7 to 133 (NIILEGSLKR…WVNEICKLCK (127 aa)). Positions 192 to 222 (SHNSLPSNPNYNNLPDPLESSRSETSSMYSS) are enriched in low complexity. Disordered regions lie at residues 192-246 (SHNS…TRHT), 275-303 (EDAEDSSGETLKLDTPEQYPESVTSSEGF), and 315-377 (RRAP…RNLD). Polar residues predominate over residues 341 to 369 (RNLSRNGVNENGNYSATFSSRTSNYQQSE).

As to quaternary structure, interacts (via C-terminus) with sem-5 (probably via SH3 domain 2). Interacts with nicotinic acetylcholine receptor. In terms of processing, may be phosphorylated.

Adapter protein which modulates signaling mediated by several receptor tyrosine kinases. Plays a role in fluid homeostasis, probably downstream of receptor egl-15 and upstream of let-60/Ras. Involved in nicotinic acetylcholine receptor (nAChR)-mediated sensitivity to nicotine and levamisole and gamma-aminobutyric acid (GABA)receptor-mediated sensitivity to muscimol. Regulates synaptic levels of nAchR receptor subunit lev-1 and unc-38, and GABA receptor subunit unc-49 in the nerve cord, probably downstream of egl-15. Regulates motility. During the formation of neuromuscular junctions at the larval stage, down-regulates membrane protrusion from body wall muscles, probably downstream of egl-15. Promotes vulva induction and down-regulates fertility, probably downstream of receptor let-23. Down-regulates daf-2-mediated repression of dauer formation and positively regulates daf-2-mediated aging. May be involved in the recruitment of phosphatase ptp-2 to egl-15. The polypeptide is Multisubstrate adapter protein soc-1 (Caenorhabditis elegans).